Consider the following 161-residue polypeptide: Ribonuclease H (161 aa).

The RNase H type-1 domain maps to 1 to 142 (MLKLVKMFSD…CDKIARQSAQ (142 aa)). Mg(2+) is bound by residues aspartate 10, glutamate 48, aspartate 70, and aspartate 134.

This sequence belongs to the RNase H family. As to quaternary structure, monomer. Mg(2+) serves as cofactor.

The protein localises to the cytoplasm. It catalyses the reaction Endonucleolytic cleavage to 5'-phosphomonoester.. Its function is as follows. Endonuclease that specifically degrades the RNA of RNA-DNA hybrids. The protein is Ribonuclease H (rnhA) of Buchnera aphidicola subsp. Schizaphis graminum (strain Sg).